Reading from the N-terminus, the 704-residue chain is Serotransferrin (704 aa).

A signal peptide spans 1–19 (MRPAVRALLACAVLGLCLA). 2 consecutive Transferrin-like domains span residues 25-351 (VRWC…NLRE) and 364-689 (VKWC…NLRQ). 2 disulfides stabilise this stretch: Cys-28-Cys-66 and Cys-38-Cys-57. Dimethylated arginine is present on Arg-42. Fe(3+)-binding residues include Asp-81 and Tyr-113. Disulfide bonds link Cys-136/Cys-217, Cys-176/Cys-192, Cys-179/Cys-200, Cys-189/Cys-202, and Cys-250/Cys-264. Hydrogencarbonate is bound by residues Thr-138, Arg-142, Ala-144, and Gly-145. Tyr-211 contributes to the Fe(3+) binding site. His-272 serves as a coordination point for Fe(3+). Disulfide bonds link Cys-362/Cys-622, Cys-367/Cys-399, Cys-377/Cys-390, Cys-424/Cys-699, Cys-441/Cys-663, Cys-473/Cys-549, Cys-497/Cys-690, Cys-507/Cys-521, Cys-518/Cys-532, Cys-589/Cys-603, and Cys-641/Cys-646. Fe(3+)-binding residues include Asp-414 and Tyr-449. Residues Thr-475, Arg-479, Ala-481, and Gly-482 each contribute to the hydrogencarbonate site. Asn-514 carries N-linked (GlcNAc...) asparagine glycosylation. Residue Tyr-543 coordinates Fe(3+). His-611 contacts Fe(3+). The residue at position 691 (Ser-691) is a Phosphoserine.

Belongs to the transferrin family. As to quaternary structure, monomer. Part of a complex composed of SLC40A1/ferroportin, TF/transferrin and HEPH/hephaestin that transfers iron from cells to transferrin. In terms of tissue distribution, expressed by the liver and secreted in plasma.

The protein resides in the secreted. Functionally, transferrins are iron binding transport proteins which can bind two Fe(3+) ions in association with the binding of an anion, usually bicarbonate. It is responsible for the transport of iron from sites of absorption and heme degradation to those of storage and utilization. Serum transferrin may also have a further role in stimulating cell proliferation. In Bos taurus (Bovine), this protein is Serotransferrin (TF).